We begin with the raw amino-acid sequence, 109 residues long: Large ribosomal subunit protein P1C (109 aa).

The segment covering 68 to 83 has biased composition (low complexity); the sequence is ASAPTAAGAGAAAPAE. A disordered region spans residues 68–109; sequence ASAPTAAGAGAAAPAEAAEEEKKEEAKEEEESDEDMGFGLFD. A compositionally biased stretch (acidic residues) spans 94–103; it reads KEEEESDEDM. Ser99 is subject to Phosphoserine.

The protein belongs to the eukaryotic ribosomal protein P1/P2 family. As to quaternary structure, component of the large ribosomal subunit (LSU). Mature yeast ribosomes consist of a small (40S) and a large (60S) subunit. The 40S small subunit contains 1 molecule of ribosomal RNA (18S rRNA) and at least 33 different proteins. The large 60S subunit contains 3 rRNA molecules (25S, 5.8S and 5S rRNA) and at least 46 different proteins. The acidic ribosomal P-proteins form the stalk structure of the 60S subunit. They are organized as a pentameric complex in which uL10/P0 interacts with 2 heterodimers of P1 and P2 proteins.

The protein resides in the cytoplasm. Its function is as follows. Component of the ribosome, a large ribonucleoprotein complex responsible for the synthesis of proteins in the cell. The small ribosomal subunit (SSU) binds messenger RNAs (mRNAs) and translates the encoded message by selecting cognate aminoacyl-transfer RNA (tRNA) molecules. The large subunit (LSU) contains the ribosomal catalytic site termed the peptidyl transferase center (PTC), which catalyzes the formation of peptide bonds, thereby polymerizing the amino acids delivered by tRNAs into a polypeptide chain. The nascent polypeptides leave the ribosome through a tunnel in the LSU and interact with protein factors that function in enzymatic processing, targeting, and the membrane insertion of nascent chains at the exit of the ribosomal tunnel. The sequence is that of Large ribosomal subunit protein P1C (rpp103) from Schizosaccharomyces pombe (strain 972 / ATCC 24843) (Fission yeast).